Reading from the N-terminus, the 234-residue chain is 7-cyano-7-deazaguanine synthase (234 aa).

7–17 contacts ATP; it reads LSGGLDSAVCM. Zn(2+) is bound by residues Cys197, Cys208, Cys211, and Cys214.

This sequence belongs to the QueC family. It depends on Zn(2+) as a cofactor.

It catalyses the reaction 7-carboxy-7-deazaguanine + NH4(+) + ATP = 7-cyano-7-deazaguanine + ADP + phosphate + H2O + H(+). Its pathway is purine metabolism; 7-cyano-7-deazaguanine biosynthesis. Catalyzes the ATP-dependent conversion of 7-carboxy-7-deazaguanine (CDG) to 7-cyano-7-deazaguanine (preQ(0)). The chain is 7-cyano-7-deazaguanine synthase from Methanococcus aeolicus (strain ATCC BAA-1280 / DSM 17508 / OCM 812 / Nankai-3).